The following is a 100-amino-acid chain: NADH-quinone oxidoreductase subunit K (100 aa).

Helical transmembrane passes span 3–23 (PTSY…VGVI), 29–49 (LVLF…LVTF), and 60–80 (IVVF…LALL).

The protein belongs to the complex I subunit 4L family. In terms of assembly, NDH-1 is composed of 14 different subunits. Subunits NuoA, H, J, K, L, M, N constitute the membrane sector of the complex.

The protein localises to the cell membrane. It carries out the reaction a quinone + NADH + 5 H(+)(in) = a quinol + NAD(+) + 4 H(+)(out). In terms of biological role, NDH-1 shuttles electrons from NADH, via FMN and iron-sulfur (Fe-S) centers, to quinones in the respiratory chain. The immediate electron acceptor for the enzyme in this species is believed to be ubiquinone. Couples the redox reaction to proton translocation (for every two electrons transferred, four hydrogen ions are translocated across the cytoplasmic membrane), and thus conserves the redox energy in a proton gradient. The protein is NADH-quinone oxidoreductase subunit K of Roseiflexus castenholzii (strain DSM 13941 / HLO8).